The chain runs to 113 residues: Hydrogenase maturation factor HybF (113 aa).

Residues H2 and E3 each contribute to the Ni(2+) site. Zn(2+) contacts are provided by C73, C76, C89, and C92.

Belongs to the HypA/HybF family. HybF subfamily.

Involved in the maturation of [NiFe] hydrogenases. Required for nickel insertion into the metal center of the hydrogenase. The chain is Hydrogenase maturation factor HybF from Escherichia coli O6:H1 (strain CFT073 / ATCC 700928 / UPEC).